The sequence spans 651 residues: Peptide-N(4)-(N-acetyl-beta-glucosaminyl)asparagine amidase (651 aa).

Ala2 carries the post-translational modification N-acetylalanine. The PUB domain maps to 30-91 (EASKLLLTYA…EGETHLIFPK (62 aa)). The segment at 116–153 (SSQKVEFSQHPAAVRLPAEQPEDPTGLMQHSGNQPGQP) is disordered. Residues 143–152 (MQHSGNQPGQ) are compositionally biased toward polar residues. The Zn(2+) site is built by Cys247, Cys250, Cys280, and Cys283. Cys306 (nucleophile) is an active-site residue. Residues His333 and Asp350 contribute to the active site. Residues 451–651 (ELGGRVSGSL…LEIIITFSDL (201 aa)) enclose the PAW domain.

Belongs to the transglutaminase-like superfamily. PNGase family. Component of a complex required to couple retrotranslocation, ubiquitination and deglycosylation composed of NGLY1, SAKS1, AMFR, VCP and RAD23B. Interacts with the proteasome components RAD23B and PSMC1. Interacts with directly with VCP. Interacts with DERL1, bringing it close to the endoplasmic reticulum membrane. Interacts with SAKS1. Zn(2+) is required as a cofactor.

Its subcellular location is the cytoplasm. The enzyme catalyses Hydrolysis of an N(4)-(acetyl-beta-D-glucosaminyl)asparagine residue in which the glucosamine residue may be further glycosylated, to yield a (substituted) N-acetyl-beta-D-glucosaminylamine and a peptide containing an aspartate residue.. With respect to regulation, inhibited by Z-VAD-fmk, a well-known caspase inhibitor, which inhibits enzyme activity through covalent binding of the carbohydrate to the single Cys-306 residue. Functionally, specifically deglycosylates the denatured form of N-linked glycoproteins in the cytoplasm and assists their proteasome-mediated degradation. Cleaves the beta-aspartyl-glucosamine (GlcNAc) of the glycan and the amide side chain of Asn, converting Asn to Asp. Prefers proteins containing high-mannose over those bearing complex type oligosaccharides. Can recognize misfolded proteins in the endoplasmic reticulum that are exported to the cytosol to be destroyed and deglycosylate them, while it has no activity toward native proteins. Deglycosylation is a prerequisite for subsequent proteasome-mediated degradation of some, but not all, misfolded glycoproteins. In Rattus norvegicus (Rat), this protein is Peptide-N(4)-(N-acetyl-beta-glucosaminyl)asparagine amidase (Ngly1).